Consider the following 483-residue polypeptide: tRNA sulfurtransferase (483 aa).

One can recognise a THUMP domain in the interval 62-166 (PEICDALTRI…QDKLILVKAR (105 aa)). Residues 184 to 185 (LI), Lys-266, Gly-288, and Gln-297 contribute to the ATP site. Cys-345 and Cys-457 form a disulfide bridge. Positions 405–483 (LADTDVLLDI…GYTNVKVYRP (79 aa)) constitute a Rhodanese domain. The active-site Cysteine persulfide intermediate is Cys-457.

It belongs to the ThiI family.

The protein resides in the cytoplasm. The enzyme catalyses [ThiI sulfur-carrier protein]-S-sulfanyl-L-cysteine + a uridine in tRNA + 2 reduced [2Fe-2S]-[ferredoxin] + ATP + H(+) = [ThiI sulfur-carrier protein]-L-cysteine + a 4-thiouridine in tRNA + 2 oxidized [2Fe-2S]-[ferredoxin] + AMP + diphosphate. It carries out the reaction [ThiS sulfur-carrier protein]-C-terminal Gly-Gly-AMP + S-sulfanyl-L-cysteinyl-[cysteine desulfurase] + AH2 = [ThiS sulfur-carrier protein]-C-terminal-Gly-aminoethanethioate + L-cysteinyl-[cysteine desulfurase] + A + AMP + 2 H(+). It participates in cofactor biosynthesis; thiamine diphosphate biosynthesis. In terms of biological role, catalyzes the ATP-dependent transfer of a sulfur to tRNA to produce 4-thiouridine in position 8 of tRNAs, which functions as a near-UV photosensor. Also catalyzes the transfer of sulfur to the sulfur carrier protein ThiS, forming ThiS-thiocarboxylate. This is a step in the synthesis of thiazole, in the thiamine biosynthesis pathway. The sulfur is donated as persulfide by IscS. The protein is tRNA sulfurtransferase of Yersinia pseudotuberculosis serotype IB (strain PB1/+).